The primary structure comprises 463 residues: Chaperone SurA (463 aa).

Positions 1–25 (MTKPFSVVLASLLAITSTVSPLASA) are cleaved as a signal peptide. PpiC domains are found at residues 174 to 276 (GSQY…KLVE) and 289 to 388 (VTEY…QRVG). Disordered regions lie at residues 329–348 (ATAKESSEDTNSRGQGGDLG) and 431–463 (YRTGDRADDNATAAPAKSPDPAAPSPPPAKPTR). Residues 441–450 (ATAAPAKSPD) are compositionally biased toward low complexity. Positions 451–463 (PAAPSPPPAKPTR) are enriched in pro residues.

It localises to the periplasm. It catalyses the reaction [protein]-peptidylproline (omega=180) = [protein]-peptidylproline (omega=0). Chaperone involved in the correct folding and assembly of outer membrane proteins. Recognizes specific patterns of aromatic residues and the orientation of their side chains, which are found more frequently in integral outer membrane proteins. May act in both early periplasmic and late outer membrane-associated steps of protein maturation. The sequence is that of Chaperone SurA from Xanthomonas axonopodis pv. citri (strain 306).